We begin with the raw amino-acid sequence, 370 residues long: Chorismate synthase (370 aa).

An NADP(+)-binding site is contributed by R47. Residues 124–126 (RSS), G286, 301–305 (KPTAT), and R327 each bind FMN.

This sequence belongs to the chorismate synthase family. In terms of assembly, homotetramer. FMNH2 serves as cofactor.

The enzyme catalyses 5-O-(1-carboxyvinyl)-3-phosphoshikimate = chorismate + phosphate. It participates in metabolic intermediate biosynthesis; chorismate biosynthesis; chorismate from D-erythrose 4-phosphate and phosphoenolpyruvate: step 7/7. Functionally, catalyzes the anti-1,4-elimination of the C-3 phosphate and the C-6 proR hydrogen from 5-enolpyruvylshikimate-3-phosphate (EPSP) to yield chorismate, which is the branch point compound that serves as the starting substrate for the three terminal pathways of aromatic amino acid biosynthesis. This reaction introduces a second double bond into the aromatic ring system. In Trichodesmium erythraeum (strain IMS101), this protein is Chorismate synthase.